Consider the following 383-residue polypeptide: Chaperone protein DnaJ (383 aa).

The 66-residue stretch at 5–70 (DYYEVLGVAK…EKRAAYDRFG (66 aa)) folds into the J domain. A CR-type zinc finger spans residues 139–217 (GKTETIRIPT…CSGAGRVNRE (79 aa)). Zn(2+) contacts are provided by Cys152, Cys155, Cys169, Cys172, Cys191, Cys194, Cys205, and Cys208. 4 CXXCXGXG motif repeats span residues 152-159 (CEACSGTG), 169-176 (CSTCGGYG), 191-198 (CPNCHGRG), and 205-212 (CTACSGAG).

This sequence belongs to the DnaJ family. Homodimer. Zn(2+) is required as a cofactor.

It is found in the cytoplasm. In terms of biological role, participates actively in the response to hyperosmotic and heat shock by preventing the aggregation of stress-denatured proteins and by disaggregating proteins, also in an autonomous, DnaK-independent fashion. Unfolded proteins bind initially to DnaJ; upon interaction with the DnaJ-bound protein, DnaK hydrolyzes its bound ATP, resulting in the formation of a stable complex. GrpE releases ADP from DnaK; ATP binding to DnaK triggers the release of the substrate protein, thus completing the reaction cycle. Several rounds of ATP-dependent interactions between DnaJ, DnaK and GrpE are required for fully efficient folding. Also involved, together with DnaK and GrpE, in the DNA replication of plasmids through activation of initiation proteins. This is Chaperone protein DnaJ from Methylorubrum populi (strain ATCC BAA-705 / NCIMB 13946 / BJ001) (Methylobacterium populi).